Here is a 349-residue protein sequence, read N- to C-terminus: 4-hydroxy-2-oxovalerate aldolase 1 (349 aa).

The region spanning 9 to 261 (ITVHDMTLRD…ATGVDVFRIQ (253 aa)) is the Pyruvate carboxyltransferase domain. 17 to 18 (RD) contacts substrate. Position 18 (Asp18) interacts with Mn(2+). His21 functions as the Proton acceptor in the catalytic mechanism. Substrate-binding residues include Ser171 and His200. Residues His200 and His202 each contribute to the Mn(2+) site. Residue Tyr291 participates in substrate binding.

The protein belongs to the 4-hydroxy-2-oxovalerate aldolase family.

It carries out the reaction (S)-4-hydroxy-2-oxopentanoate = acetaldehyde + pyruvate. This chain is 4-hydroxy-2-oxovalerate aldolase 1, found in Methylibium petroleiphilum (strain ATCC BAA-1232 / LMG 22953 / PM1).